A 301-amino-acid chain; its full sequence is uncharacterized protein (301 aa).

Residues serine 44 and tyrosine 107 each act as charge relay system in the active site. Tyrosine 133 acts as the Proton donor in catalysis. Catalysis depends on lysine 162, which acts as the Schiff-base intermediate with substrate.

The protein belongs to the DapA family. As to quaternary structure, homotetramer.

The protein resides in the cytoplasm. This is an uncharacterized protein from Pyrobaculum aerophilum (strain ATCC 51768 / DSM 7523 / JCM 9630 / CIP 104966 / NBRC 100827 / IM2).